A 743-amino-acid polypeptide reads, in one-letter code: MLKTDSLDFHSYLPPYRSLINPNARYDYRTHSLIPLTQNDLNLLRIAFQKKKEAPPSAFKMKYKSLLSDVSRTISMRLSNSNLLSSSSANNNNVLLSPPPSSSSTLSTPCGNILNRAGTTSSNISKINNLSQNQTQNQLPLFPAELHIKNLPVEILDYIFYLVDDNLDYKSCMYTCKLFYFLAKPYYYENLVFTSTYRFAQFVTYLRVNSEVGQYVQSIDLSGIKPGYDEDEQEEGQEENAENGEEENGGGARDPQYLLGEIADNPHHERVDQFPRGKILAGWRDWKFKNNPLYTIHPSPSLTKIASNSQFSNVSSKSSRSTSSKSSSSTTKKFVKPFRYFKSRKRKMSYSGTTKLERKSPRLEQLQLDQYSSNWNKRVNSHPLINKFLLHYSTSKDLPIGYILHMINLCPNIVSLNLGNLSLSTDYEISRSTIHKYQNFDLINNYPKDLIYKVDNIMRLNDVDDVYSIDGSILRFGNINSGSSGSNWERNGSSSNNRILFKSNQSIASTASSVYSVTTFSKPIRKYNSLLPPLPQTVADISYLNKGDGKVYLSDLNLKEINSAYLKKINEDEILSAIINVHGKRLIEYDTSLYQIPKPLNVDIAGTLKYINLSSMIWLNRKLIEKFLTRLLTKKSPELDMYGICYTDEFFDSDEQESDDDYEDSDDEEQRQCPIIYKQNLVIDFTDSGMYKSLPWAKRIDLNSFEGCQLANKIINNDLMTPQEQALRRERRRRGAIAANYLA.

The region spanning 145–191 (ELHIKNLPVEILDYIFYLVDDNLDYKSCMYTCKLFYFLAKPYYYENL) is the F-box domain. Disordered regions lie at residues 224 to 257 (IKPG…DPQY) and 311 to 330 (FSNV…SSST). The segment covering 229-248 (DEDEQEEGQEENAENGEEEN) has biased composition (acidic residues).

F-box protein probably involved in ubiquitin conjugation pathway. The sequence is that of F-box protein COS111 (COS111) from Candida albicans (strain SC5314 / ATCC MYA-2876) (Yeast).